Consider the following 160-residue polypeptide: Large ribosomal subunit protein uL22c (160 aa).

Belongs to the universal ribosomal protein uL22 family. In terms of assembly, part of the 50S ribosomal subunit.

It localises to the plastid. The protein resides in the chloroplast. Its function is as follows. This protein binds specifically to 23S rRNA. The globular domain of the protein is located near the polypeptide exit tunnel on the outside of the subunit, while an extended beta-hairpin is found that lines the wall of the exit tunnel in the center of the 70S ribosome. In Eucalyptus globulus subsp. globulus (Tasmanian blue gum), this protein is Large ribosomal subunit protein uL22c (rpl22).